A 322-amino-acid chain; its full sequence is Thioredoxin reductase (322 aa).

FAD is bound by residues 12-15, 34-42, Asn-51, and Val-84; these read SGPA and EGAVTAGGA. A disulfide bridge links Cys-136 with Cys-139. NADP(+)-binding residues include His-176, Arg-182, and Tyr-259. Residues Asp-279 and 286–289 each bind FAD; that span reads RQAI. Arg-286 is a binding site for NADP(+).

This sequence belongs to the class-II pyridine nucleotide-disulfide oxidoreductase family. As to quaternary structure, homodimer. It depends on FAD as a cofactor.

The enzyme catalyses [thioredoxin]-dithiol + NADP(+) = [thioredoxin]-disulfide + NADPH + H(+). Component of the thioredoxin-thioredoxin reductase system which may be involved in biosynthesis of penicillins and cephalosporins and may be important in determining the thiol-disulfide redox balance. This is Thioredoxin reductase from Streptomyces clavuligerus.